Consider the following 716-residue polypeptide: DNA ligase (716 aa).

Residues 42 to 46 (DAEYD), 91 to 92 (SL), and glutamate 125 contribute to the NAD(+) site. Lysine 127 (N6-AMP-lysine intermediate) is an active-site residue. NAD(+)-binding residues include arginine 148, glutamate 184, lysine 300, and lysine 324. Zn(2+)-binding residues include cysteine 429, cysteine 432, cysteine 447, and cysteine 453. In terms of domain architecture, BRCT spans 638-716 (TASSPIAGKI…EEAWLQLIEG (79 aa)).

It belongs to the NAD-dependent DNA ligase family. LigA subfamily. It depends on Mg(2+) as a cofactor. Mn(2+) serves as cofactor.

The catalysed reaction is NAD(+) + (deoxyribonucleotide)n-3'-hydroxyl + 5'-phospho-(deoxyribonucleotide)m = (deoxyribonucleotide)n+m + AMP + beta-nicotinamide D-nucleotide.. Its function is as follows. DNA ligase that catalyzes the formation of phosphodiester linkages between 5'-phosphoryl and 3'-hydroxyl groups in double-stranded DNA using NAD as a coenzyme and as the energy source for the reaction. It is essential for DNA replication and repair of damaged DNA. This Bartonella henselae (strain ATCC 49882 / DSM 28221 / CCUG 30454 / Houston 1) (Rochalimaea henselae) protein is DNA ligase.